Consider the following 533-residue polypeptide: Flavin-containing monooxygenase 5 (533 aa).

A Dimethylated arginine modification is found at arginine 5. Residues 10–14, glutamate 33, and 41–42 each bind FAD; these read GGGVS and LW. Serine 54 carries the post-translational modification Phosphoserine. Tyrosine 56 carries the phosphotyrosine modification. Serine 58 is modified (phosphoserine). FAD is bound at residue 62 to 63; the sequence is NT. 196–199 contacts NADP(+); that stretch reads SGGD. Residue serine 280 is modified to Phosphoserine. Threonine 284 is subject to Phosphothreonine. A Phosphoserine modification is found at serine 401. The chain crosses the membrane as a helical span at residues 510-530; that stretch reads MVSAVTTGCFMLAVVFFAIIM.

Belongs to the FMO family. FAD serves as cofactor. Expressed in liver.

It is found in the microsome membrane. The protein localises to the endoplasmic reticulum membrane. The catalysed reaction is N,N-dimethylaniline + NADPH + O2 + H(+) = N,N-dimethylaniline N-oxide + NADP(+) + H2O. The enzyme catalyses NADPH + O2 + H(+) = H2O2 + NADP(+). It carries out the reaction heptan-2-one + NADPH + O2 + H(+) = pentyl acetate + NADP(+) + H2O. It catalyses the reaction octan-3-one + NADPH + O2 + H(+) = pentyl propanoate + NADP(+) + H2O. The catalysed reaction is octan-3-one + NADPH + O2 + H(+) = ethyl hexanoate + NADP(+) + H2O. The enzyme catalyses hexan-3-one + NADPH + O2 + H(+) = ethyl butanoate + NADP(+) + H2O. It carries out the reaction hexan-3-one + NADPH + O2 + H(+) = propyl propanoate + NADP(+) + H2O. It catalyses the reaction heptan-4-one + NADPH + O2 + H(+) = propyl butanoate + NADP(+) + H2O. The catalysed reaction is (2E)-geranial + NADPH + O2 + H(+) = (1E)-2,6-dimethylhepta-1,5-dien-1-yl formate + NADP(+) + H2O. The enzyme catalyses sulcatone + NADPH + O2 + H(+) = 4-methylpent-3-en-1-yl acetate + NADP(+) + H2O. In terms of biological role, acts as a Baeyer-Villiger monooxygenase on a broad range of substrates. Catalyzes the insertion of an oxygen atom into a carbon-carbon bond adjacent to a carbonyl, which converts ketones to esters. Active on diverse carbonyl compounds, whereas soft nucleophiles are mostly non- or poorly reactive. In contrast with other forms of FMO it is non- or poorly active on 'classical' substrates such as drugs, pesticides, and dietary components containing soft nucleophilic heteroatoms. Able to oxidize drug molecules bearing a carbonyl group on an aliphatic chain, such as nabumetone and pentoxifylline. Also, in the absence of substrates, shows slow but yet significant NADPH oxidase activity. Acts as a positive modulator of cholesterol biosynthesis as well as glucose homeostasis, promoting metabolic aging via pleiotropic effects. This Cavia porcellus (Guinea pig) protein is Flavin-containing monooxygenase 5 (FMO5).